The sequence spans 243 residues: ATP-dependent dethiobiotin synthetase BioD (243 aa).

12 to 17 (DVGKTF) serves as a coordination point for ATP. Thr-16 contacts Mg(2+). Residue Lys-37 is part of the active site. Ser-41 contributes to the substrate binding site. Residues Asp-54, 115 to 118 (EGCG), and 179 to 180 (NM) contribute to the ATP site. The Mg(2+) site is built by Asp-54 and Glu-115.

Belongs to the dethiobiotin synthetase family. In terms of assembly, homodimer. Requires Mg(2+) as cofactor.

The protein localises to the cytoplasm. It catalyses the reaction (7R,8S)-7,8-diammoniononanoate + CO2 + ATP = (4R,5S)-dethiobiotin + ADP + phosphate + 3 H(+). The protein operates within cofactor biosynthesis; biotin biosynthesis; biotin from 7,8-diaminononanoate: step 1/2. Catalyzes a mechanistically unusual reaction, the ATP-dependent insertion of CO2 between the N7 and N8 nitrogen atoms of 7,8-diaminopelargonic acid (DAPA, also called 7,8-diammoniononanoate) to form a ureido ring. This is ATP-dependent dethiobiotin synthetase BioD from Caldicellulosiruptor bescii (strain ATCC BAA-1888 / DSM 6725 / KCTC 15123 / Z-1320) (Anaerocellum thermophilum).